Reading from the N-terminus, the 519-residue chain is MAEEKLSARTQLPVSAESQKPVLKKAPEFPILEKQNWLIHLYYIQKDYEACKAVIKEQLQETHGLCEYAIYVQALIFRLEGNIQESLRLFQMCAFLSPQCADNLKQVARSLFLLGKHKAAIEVYNEAAKLNQKDWEICHNLGVCYIYLKQFDKAQDQLHNALHLNRHDLTYIMLGKIFLLKGDLDKAIEIYKKAVEFSPENTELLTTLGLLYLQLGIYQKAFEHLGNTLTYDPTNYKAILAAGSMMQTHGDFDVALTKYKVVACAVIESPPLWNNIGMCFFGKKKYVAAISCLKRANYLAPLDWKILYNLGLVHLTMQQYASAFHFLSAAINFQPKMGELYMLLAVALTNLEDSENAKRAYEEAVRLDKCNPLVNLNYAVLLYNQGEKRDALAQYQEMEKKVNLLKYSSSLEFDPEMVEVAQKLGAALQVGEALVWTKPVKDPKSKHQTASTSKAAGFQQPLGSNQALGQAMSSAATCRKLSSGAGGTSQLTKPPSLPLEPEPTVEAQPTEASAQTREK.

Residues 1–66 (MAEEKLSART…EQLQETHGLC (66 aa)) form a required for localization to centrosomes region. TPR repeat units lie at residues 67–100 (EYAIYVQALIFRLEGNIQESLRLFQMCAFLSPQC), 101–134 (ADNLKQVARSLFLLGKHKAAIEVYNEAAKLNQKD), 135–168 (WEICHNLGVCYIYLKQFDKAQDQLHNALHLNRHD), 169–201 (LTYIMLGKIFLLKGDLDKAIEIYKKAVEFSPEN), 203–235 (ELLTTLGLLYLQLGIYQKAFEHLGNTLTYDPTN), 237–269 (KAILAAGSMMQTHGDFDVALTKYKVVACAVIES), 270–303 (PPLWNNIGMCFFGKKKYVAAISCLKRANYLAPLD), 304–337 (WKILYNLGLVHLTMQQYASAFHFLSAAINFQPKM), 339–371 (ELYMLLAVALTNLEDSENAKRAYEEAVRLDKCN), and 379–417 (AVLLYNQGEKRDALAQYQEMEKKVNLLKYSSSLEFDPEM). The interval 101–337 (ADNLKQVARS…SAAINFQPKM (237 aa)) is interaction with PCM1. A required for localization to centrosomes region spans residues 338–519 (GELYMLLAVA…TEASAQTREK (182 aa)). A disordered region spans residues 439 to 519 (PVKDPKSKHQ…TEASAQTREK (81 aa)). Polar residues-rich tracts occupy residues 461–476 (PLGSNQALGQAMSSAA) and 510–519 (TEASAQTREK).

It belongs to the BBS4 family. As to quaternary structure, part of BBSome complex, that contains BBS1, BBS2, BBS4, BBS5, BBS7, BBS8, BBS9 and BBIP10. Interacts with PCM1 and DCTN1. Interacts with CCDC28B. Interacts with ALDOB and C2CD3. Interacts with PKD1. Interacts with CEP290. Interacts with DLEC1.

It localises to the cytoplasm. The protein localises to the cytoskeleton. The protein resides in the microtubule organizing center. It is found in the centrosome. Its subcellular location is the cell projection. It localises to the cilium membrane. The protein localises to the centriolar satellite. The protein resides in the cilium. It is found in the flagellum. In terms of biological role, may be required for the dynein-mediated transport of pericentriolar proteins to the centrosome. Required for microtubule anchoring at the centrosome but not for microtubule nucleation. The BBSome complex is required for ciliogenesis but is dispensable for centriolar satellite function. This ciliogenic function is mediated in part by the Rab8 GDP/GTP exchange factor, which localizes to the basal body and contacts the BBSome. Rab8(GTP) enters the primary cilium and promotes extension of the ciliary membrane. Firstly the BBSome associates with the ciliary membrane and binds to RAB3IP/Rabin8, the guanosyl exchange factor (GEF) for Rab8 and then the Rab8-GTP localizes to the cilium and promotes docking and fusion of carrier vesicles to the base of the ciliary membrane. The chain is BBSome complex member BBS4 (BBS4) from Bos taurus (Bovine).